Reading from the N-terminus, the 226-residue chain is Ras-related protein Rab11A (226 aa).

Residues 24–32 (GDSAVGKSQ), 43–49 (SLDSKST), 72–76 (DTAGQ), 130–133 (NKCD), and 160–162 (SAL) each bind GTP. Positions 46–54 (SKSTIGVEF) match the Effector region motif. Residues Cys222 and Cys223 are each lipidated (S-geranylgeranyl cysteine). The residue at position 223 (Cys223) is a Cysteine methyl ester. The propeptide at 224–226 (QAS) is removed in mature form.

The protein belongs to the small GTPase superfamily. Rab family.

It is found in the cell membrane. This is Ras-related protein Rab11A (RAB11A) from Lotus japonicus (Lotus corniculatus var. japonicus).